A 569-amino-acid chain; its full sequence is MKKISRKEYASMYGPTTGDKVRLGDTDLIAEVEHDYTIYGEELKFGGGKTLREGMSQSNNPSKEELDLIITNALIVDYTGIYKADIGIKDGKIAGIGKGGNKDMQDGVKNNLSVGPATEALAGEGLIVTAGGIDTHIHFISPQQIPTAFASGVTTMIGGGTGPADGTNATTITPGRRNLKFMLRAAEEYSMNIGFLAKGNASNDASLADQIEAGAIGLKIHEDWGTTPSAINHALDVADKYDVQVAIHTDTLNEAGCVEDTMAAIAGRTMHTYHTEGAGGGHAPDIIKVAGEHNILPASTNPTIPFTVNTEAEHMDMLMVCHHLDKSIKEDVQFADSRIRPQTIAAEDTLHDMGIFSITSSDSQAMGRVGEVITRTWQTADKNKKEFGRLKEEKGDNDNFRIKRYLSKYTINPAIAHGISEYVGSVEVGKVADLVLWSPAFFGVKPNMIIKGGFIALSQMGDANASIPTPQPVYYREMFAHHGKAKYDANITFVSQAAYDKGIKEELGLERQVLPVKNCRNITKKDMQFNDTTAHIEVNSETYHVFVDGKEVTSKPANKVSLAQLFSIF.

Positions 131-569 constitute a Urease domain; it reads GGIDTHIHFI…VSLAQLFSIF (439 aa). His-136, His-138, and Lys-219 together coordinate Ni(2+). N6-carboxylysine is present on Lys-219. His-221 contributes to the substrate binding site. Ni(2+) contacts are provided by His-248 and His-274. The Proton donor role is filled by His-322. Asp-362 provides a ligand contact to Ni(2+).

It belongs to the metallo-dependent hydrolases superfamily. Urease alpha subunit family. In terms of assembly, heterohexamer of 3 UreA (alpha) and 3 UreB (beta) subunits. It depends on Ni cation as a cofactor. Post-translationally, carboxylation allows a single lysine to coordinate two nickel ions.

It localises to the cytoplasm. It carries out the reaction urea + 2 H2O + H(+) = hydrogencarbonate + 2 NH4(+). It functions in the pathway nitrogen metabolism; urea degradation; CO(2) and NH(3) from urea (urease route): step 1/1. This chain is Urease subunit beta, found in Helicobacter pylori (strain Shi470).